The following is a 429-amino-acid chain: Glutamate--tRNA ligase 1 (429 aa).

The 'HIGH' region signature appears at 6–16 (PSPTGDMHIGN). The 'KMSKS' region signature appears at 235-239 (KMSKR). Lys-238 lines the ATP pocket.

Belongs to the class-I aminoacyl-tRNA synthetase family. Glutamate--tRNA ligase type 1 subfamily. As to quaternary structure, monomer.

The protein localises to the cytoplasm. The catalysed reaction is tRNA(Glu) + L-glutamate + ATP = L-glutamyl-tRNA(Glu) + AMP + diphosphate. Its function is as follows. Catalyzes the attachment of glutamate to tRNA(Glu) in a two-step reaction: glutamate is first activated by ATP to form Glu-AMP and then transferred to the acceptor end of tRNA(Glu). In Campylobacter fetus subsp. fetus (strain 82-40), this protein is Glutamate--tRNA ligase 1.